A 182-amino-acid polypeptide reads, in one-letter code: NADH-quinone oxidoreductase subunit 9 (182 aa).

4Fe-4S ferredoxin-type domains are found at residues L43–A73 and K89–D118. Residues C53, C56, S57, C59, C63, C98, I99, C101, C104, and C108 each coordinate [4Fe-4S] cluster.

It belongs to the complex I 23 kDa subunit family. As to quaternary structure, NDH-1 is composed of 15 different subunits, Nqo1 to Nqo15. The complex has a L-shaped structure, with the hydrophobic arm (subunits Nqo7, Nqo8 and Nqo10 to Nqo14) embedded in the membrane and the hydrophilic peripheral arm (subunits Nqo1 to Nqo6, Nqo9 and Nqo15) protruding into the bacterial cytoplasm. The hydrophilic domain contains all the redox centers. Requires [4Fe-4S] cluster as cofactor.

The protein resides in the cell membrane. It carries out the reaction a quinone + NADH + 5 H(+)(in) = a quinol + NAD(+) + 4 H(+)(out). Functionally, NDH-1 shuttles electrons from NADH, via FMN and iron-sulfur (Fe-S) centers, to quinones in the respiratory chain. The immediate electron acceptor for the enzyme in this species is menaquinone. Couples the redox reaction to proton translocation (for every two electrons transferred, four hydrogen ions are translocated across the cytoplasmic membrane), and thus conserves the redox energy in a proton gradient required for the synthesis of ATP. The role of the Nqo9 subunit appears to provide a 'connecting chain' of two clusters between cluster N5 and the terminal cluster N2, and to stabilize the structure of the complex by interacting with other subunits. The polypeptide is NADH-quinone oxidoreductase subunit 9 (nqo9) (Thermus thermophilus (strain ATCC 27634 / DSM 579 / HB8)).